Here is a 464-residue protein sequence, read N- to C-terminus: Chitobiosyldiphosphodolichol beta-mannosyltransferase (464 aa).

The Lumenal segment spans residues 1–2; that stretch reads MA. A helical membrane pass occupies residues 3-23; that stretch reads ASCLVLLALCLLLPLLLLGGW. The Cytoplasmic segment spans residues 24–99; sequence KRWRRGRAAR…ELQSLAVGPR (76 aa). The helical intramembrane region spans 100–120; that stretch reads VFQYGVKVVLQAMYLLWKLMW. The Cytoplasmic portion of the chain corresponds to 121–464; the sequence is REPGAYIFLQ…QTVLPLVMDT (344 aa). A Phosphoserine modification is found at Ser-242. The disordered stretch occupies residues 243 to 262; the sequence is PFRARSEPEDPVTERSAFTE.

Belongs to the glycosyltransferase group 1 family. Glycosyltransferase 33 subfamily.

The protein localises to the endoplasmic reticulum membrane. The catalysed reaction is an N,N'-diacetylchitobiosyl-diphospho-di-trans,poly-cis-dolichol + GDP-alpha-D-mannose = a beta-D-Man-(1-&gt;4)-beta-D-GlcNAc-(1-&gt;4)-alpha-D-GlcNAc-diphospho-di-trans,poly-cis-dolichol + GDP + H(+). The protein operates within protein modification; protein glycosylation. Mannosyltransferase that operates in the biosynthetic pathway of dolichol-linked oligosaccharides, the glycan precursors employed in protein asparagine (N)-glycosylation. The assembly of dolichol-linked oligosaccharides begins on the cytosolic side of the endoplasmic reticulum membrane and finishes in its lumen. The sequential addition of sugars to dolichol pyrophosphate produces dolichol-linked oligosaccharides containing fourteen sugars, including two GlcNAcs, nine mannoses and three glucoses. Once assembled, the oligosaccharide is transferred from the lipid to nascent proteins by oligosaccharyltransferases. Catalyzes, on the cytoplasmic face of the endoplasmic reticulum, the addition of the first mannose residues to the dolichol-linked oligosaccharide chain, to produce Man1GlcNAc(2)-PP-dolichol core oligosaccharide. Man1GlcNAc(2)-PP-dolichol is a substrate for ALG2, the following enzyme in the biosynthetic pathway. This is Chitobiosyldiphosphodolichol beta-mannosyltransferase from Homo sapiens (Human).